The chain runs to 215 residues: GTP-binding nuclear protein Ran (215 aa).

In terms of domain architecture, Small GTPase Ran-type spans 6–170 (DIPTFKLVLV…LWLARKLLGD (165 aa)). GTP is bound by residues 17 to 24 (DGGTGKTT), 35 to 41 (EKKYVAT), G67, 121 to 124 (NKVD), and 149 to 151 (SAK). The tract at residues 36–44 (KKYVATLGV) is switch-I. The segment at 67-83 (GQEKFGGLRDGYYIQGQ) is switch-II.

The protein belongs to the small GTPase superfamily. Ran family. In terms of assembly, found in a nuclear export complex with RanGTP, exportin and pre-miRNA.

It is found in the nucleus. Functionally, GTP-binding protein involved in nucleocytoplasmic transport. Required for the import of protein into the nucleus and also for RNA export. Involved in chromatin condensation and control of cell cycle. This chain is GTP-binding nuclear protein Ran, found in Brugia malayi (Filarial nematode worm).